Here is a 393-residue protein sequence, read N- to C-terminus: Probable hydrolase sll0100 (393 aa).

The protein belongs to the peptidase M20 family.

The sequence is that of Probable hydrolase sll0100 from Synechocystis sp. (strain ATCC 27184 / PCC 6803 / Kazusa).